A 386-amino-acid polypeptide reads, in one-letter code: MMMMALSKTFGQKPVKFQLEEDGEFYMIGSEVGNYLRMFRGSLYKRYPSLWRRLATVEERKKIVASSHENQRSHSPRRYHGYTTLATSVTLLKASEVEEILDGNDEKYKAVSISTEPPTYLREQKAKRNNQWVPTLPNSSHHLDAVPCSTTINRNRMGRDKKRTFPLCFDDHDPAVIHENASQPEVLVPIRLDMEIDGQKLRDAFTWNMNEKLMTPEMFSEILCDDLDLNPLTFVPAIASAIRQQIESYPTDSILEDQSDQRVIIKLNIHVGNISLVDQFEWDMSEKENSPEKFALKLCSELGLGGEFVTTIAYSIRGQLSWHQKTYAFSENPLPTVEIAIRNTGDADQWCPLLETLTDAEMEKKIRDQDRNTRRMRRLANTAPAW.

Positions 1-114 (MMMMALSKTF…DEKYKAVSIS (114 aa)) are DNA-binding.

It belongs to the SNF5 family. As to quaternary structure, component of the multiprotein chromatin-remodeling complexes SWI/SNF. Component of neural progenitors-specific chromatin remodeling complex (npBAF complex) and the neuron-specific chromatin remodeling complex (nBAF complex). Component of the BAF (SWI/SNF) chromatin remodeling complex. Component of the SWI/SNF-B (PBAF) chromatin remodeling complex. Binds to double-stranded DNA.

The protein resides in the nucleus. Its function is as follows. Involved in chromatin-remodeling. Core component of the BAF (SWI/SNF) complex. This ATP-dependent chromatin-remodeling complex plays important roles in cell proliferation and differentiation, in cellular antiviral activities and inhibition of tumor formation. Belongs to the neural progenitors-specific chromatin remodeling complex (npBAF complex) and the neuron-specific chromatin remodeling complex (nBAF complex) and may play a role in neural development. This chain is SWI/SNF-related matrix-associated actin-dependent regulator of chromatin subfamily B member 1 (SMARCB1), found in Gallus gallus (Chicken).